Here is a 251-residue protein sequence, read N- to C-terminus: 3-deoxy-manno-octulosonate cytidylyltransferase (251 aa).

Belongs to the KdsB family.

It is found in the cytoplasm. It catalyses the reaction 3-deoxy-alpha-D-manno-oct-2-ulosonate + CTP = CMP-3-deoxy-beta-D-manno-octulosonate + diphosphate. It participates in nucleotide-sugar biosynthesis; CMP-3-deoxy-D-manno-octulosonate biosynthesis; CMP-3-deoxy-D-manno-octulosonate from 3-deoxy-D-manno-octulosonate and CTP: step 1/1. Its pathway is bacterial outer membrane biogenesis; lipopolysaccharide biosynthesis. In terms of biological role, activates KDO (a required 8-carbon sugar) for incorporation into bacterial lipopolysaccharide in Gram-negative bacteria. The protein is 3-deoxy-manno-octulosonate cytidylyltransferase of Brucella canis (strain ATCC 23365 / NCTC 10854 / RM-666).